Consider the following 138-residue polypeptide: MLSPKRTKFRKAHKGRIHGTAKGNTQLNFGQFGLKALEPERITARQIESARRAITRQMKRAGRVWIRIFPDLPVSTKPAEVRMGSGKGAPEYWVARVQPGRIMFEIDGVAEGIAREALKLGAAKLPIKTKIVTRIGEA.

This sequence belongs to the universal ribosomal protein uL16 family. In terms of assembly, part of the 50S ribosomal subunit.

Its function is as follows. Binds 23S rRNA and is also seen to make contacts with the A and possibly P site tRNAs. The protein is Large ribosomal subunit protein uL16 of Acidiphilium cryptum (strain JF-5).